Reading from the N-terminus, the 472-residue chain is Aspartyl/glutamyl-tRNA(Asn/Gln) amidotransferase subunit B (472 aa).

Belongs to the GatB/GatE family. GatB subfamily. In terms of assembly, heterotrimer of A, B and C subunits.

The catalysed reaction is L-glutamyl-tRNA(Gln) + L-glutamine + ATP + H2O = L-glutaminyl-tRNA(Gln) + L-glutamate + ADP + phosphate + H(+). It catalyses the reaction L-aspartyl-tRNA(Asn) + L-glutamine + ATP + H2O = L-asparaginyl-tRNA(Asn) + L-glutamate + ADP + phosphate + 2 H(+). Allows the formation of correctly charged Asn-tRNA(Asn) or Gln-tRNA(Gln) through the transamidation of misacylated Asp-tRNA(Asn) or Glu-tRNA(Gln) in organisms which lack either or both of asparaginyl-tRNA or glutaminyl-tRNA synthetases. The reaction takes place in the presence of glutamine and ATP through an activated phospho-Asp-tRNA(Asn) or phospho-Glu-tRNA(Gln). The sequence is that of Aspartyl/glutamyl-tRNA(Asn/Gln) amidotransferase subunit B from Campylobacter jejuni subsp. jejuni serotype O:2 (strain ATCC 700819 / NCTC 11168).